The sequence spans 286 residues: Aspartate/glutamate leucyltransferase (286 aa).

It belongs to the R-transferase family. Bpt subfamily.

The protein localises to the cytoplasm. The enzyme catalyses N-terminal L-glutamyl-[protein] + L-leucyl-tRNA(Leu) = N-terminal L-leucyl-L-glutamyl-[protein] + tRNA(Leu) + H(+). It carries out the reaction N-terminal L-aspartyl-[protein] + L-leucyl-tRNA(Leu) = N-terminal L-leucyl-L-aspartyl-[protein] + tRNA(Leu) + H(+). Its function is as follows. Functions in the N-end rule pathway of protein degradation where it conjugates Leu from its aminoacyl-tRNA to the N-termini of proteins containing an N-terminal aspartate or glutamate. The polypeptide is Aspartate/glutamate leucyltransferase (Jannaschia sp. (strain CCS1)).